Consider the following 215-residue polypeptide: Adenylate kinase (215 aa).

10-15 provides a ligand contact to ATP; that stretch reads GAGKGT. Residues 30–59 are NMP; that stretch reads STGDIFRDAVNQGSELGQEAQKYMSSGQLV. AMP contacts are provided by residues threonine 31, arginine 36, 57-59, 85-88, and glutamine 92; these read QLV and GFPR. The tract at residues 126 to 163 is LID; that stretch reads GRISCRECKRVYNLNFNPPREQGKCDSCGGELVQRNDD. An ATP-binding site is contributed by arginine 127. Residues cysteine 130 and cysteine 133 each contribute to the Zn(2+) site. 136–137 is an ATP binding site; it reads VY. Zn(2+) is bound by residues cysteine 150 and cysteine 153. 2 residues coordinate AMP: arginine 160 and arginine 171. Position 199 (arginine 199) interacts with ATP.

This sequence belongs to the adenylate kinase family. As to quaternary structure, monomer.

The protein localises to the cytoplasm. It catalyses the reaction AMP + ATP = 2 ADP. The protein operates within purine metabolism; AMP biosynthesis via salvage pathway; AMP from ADP: step 1/1. In terms of biological role, catalyzes the reversible transfer of the terminal phosphate group between ATP and AMP. Plays an important role in cellular energy homeostasis and in adenine nucleotide metabolism. This chain is Adenylate kinase, found in Syntrophomonas wolfei subsp. wolfei (strain DSM 2245B / Goettingen).